We begin with the raw amino-acid sequence, 368 residues long: MFMKSIVEEALARAEREKKERIEGRGFEDVEDEILQVLHELKTVIKVIGVGGGGCNTITRMYEEGIEGAELIALNTDVQHLYYTKANRRILIGKRRTRGLGAGSLPQVGEEAARESEDEIKKLVEGSDMVFVTCGLGGGTGTGAAPVVAEAAQEAGALTIAVVTFPFSAEGAVRRANAEAGLERLREVADTVIVIPNDRLLEVVPNYPMQLAFKVADEILMRAVKGITELITKPALINLDFADVRTVMEKGGVAMIGLGEASGEDKAAESVRKALKSPLLDVDVSGAKAALVNVTGGPDMTIEEAESVIEEIYSKVDPDARIIWGAMIDPELENTMRTLIIVTGVKSPQILGRKGYPVTRKYGIDFVR.

Residues 52 to 56 (GGGCN), 139 to 141 (GTG), E170, R174, and D217 each bind GTP.

This sequence belongs to the FtsZ family. Homodimer. Polymerizes to form a dynamic ring structure in a strictly GTP-dependent manner. Interacts directly with several other division proteins.

It localises to the cytoplasm. Functionally, essential cell division protein that forms a contractile ring structure (Z ring) at the future cell division site. The regulation of the ring assembly controls the timing and the location of cell division. One of the functions of the FtsZ ring is to recruit other cell division proteins to the septum to produce a new cell wall between the dividing cells. Binds GTP and shows GTPase activity. The sequence is that of Cell division protein FtsZ 1 from Archaeoglobus fulgidus (strain ATCC 49558 / DSM 4304 / JCM 9628 / NBRC 100126 / VC-16).